The primary structure comprises 474 residues: Glutamate--tRNA ligase (474 aa).

The short motif at 10–20 is the 'HIGH' region element; it reads PSPTGYLHIGG. Cysteine 107, cysteine 109, cysteine 134, and aspartate 136 together coordinate Zn(2+). The 'KMSKS' region signature appears at 244 to 248; that stretch reads RLSKR. Lysine 247 is a binding site for ATP.

It belongs to the class-I aminoacyl-tRNA synthetase family. Glutamate--tRNA ligase type 1 subfamily. As to quaternary structure, monomer. It depends on Zn(2+) as a cofactor.

The protein resides in the cytoplasm. The enzyme catalyses tRNA(Glu) + L-glutamate + ATP = L-glutamyl-tRNA(Glu) + AMP + diphosphate. Its function is as follows. Catalyzes the attachment of glutamate to tRNA(Glu) in a two-step reaction: glutamate is first activated by ATP to form Glu-AMP and then transferred to the acceptor end of tRNA(Glu). The chain is Glutamate--tRNA ligase from Anaeromyxobacter sp. (strain K).